The sequence spans 507 residues: Interleukin-17 receptor E-like protein (507 aa).

An N-terminal signal peptide occupies residues 1-21; the sequence is MLAGQALAFLGLTWGTFQSLA.

The protein localises to the secreted. This chain is Interleukin-17 receptor E-like protein, found in Homo sapiens (Human).